An 823-amino-acid chain; its full sequence is Ubiquitin carboxyl-terminal hydrolase 16 (823 aa).

The UBP-type zinc-finger motif lies at 22-142 (PVCRHIRKGL…QVVDYVRKQA (121 aa)). Zn(2+) contacts are provided by Cys24, His26, Cys48, Cys51, Cys74, Cys77, Cys82, His90, His94, His103, Cys116, and Cys119. Lys140 is covalently cross-linked (Glycyl lysine isopeptide (Lys-Gly) (interchain with G-Cter in SUMO2)). A disordered region spans residues 146 to 189 (TPKPAEKDNGNIELENKKLEKESKNEQEREKKENMAKENPPMNS). Basic and acidic residues predominate over residues 149 to 181 (PAEKDNGNIELENKKLEKESKNEQEREKKENMA). The residue at position 189 (Ser189) is a Phosphoserine. The 627-residue stretch at 196-822 (KGLSNLGNTC…QAYLLFYERI (627 aa)) folds into the USP domain. Cys205 serves as the catalytic Nucleophile. Positions 394–408 (SGKKSVNDKNLKKTV) are enriched in basic and acidic residues. The interval 394–460 (SGKKSVNDKN…AKNQRRQQKI (67 aa)) is disordered. Over residues 409–420 (EDEDQDSEEEKD) the composition is skewed to acidic residues. Ser415 bears the Phosphoserine mark. Positions 421 to 430 (NDSYIKERSD) are enriched in basic and acidic residues. The span at 438-458 (HLQKKAKKQAKKQAKNQRRQQ) shows a compositional bias: basic residues. 2 positions are modified to phosphoserine: Ser531 and Ser552. Thr554 carries the post-translational modification Phosphothreonine. His758 acts as the Proton acceptor in catalysis.

Belongs to the peptidase C19 family. USP16 subfamily. Homotetramer. Associates with late pre-40S ribosomes. Interacts with CEP78; promoting deubiquitination of tektins. Post-translationally, phosphorylated at the onset of mitosis and dephosphorylated during the metaphase/anaphase transition. Phosphorylation by AURKB enhances the deubiquitinase activity. Present in all the tissues examined including fetal brain, lung, liver, kidney, and adult heart, brain, placenta, lung, liver, skeletal muscle, kidney and pancreas.

The protein resides in the nucleus. It is found in the cytoplasm. The catalysed reaction is Thiol-dependent hydrolysis of ester, thioester, amide, peptide and isopeptide bonds formed by the C-terminal Gly of ubiquitin (a 76-residue protein attached to proteins as an intracellular targeting signal).. Functionally, specifically deubiquitinates 'Lys-120' of histone H2A (H2AK119Ub), a specific tag for epigenetic transcriptional repression, thereby acting as a coactivator. Deubiquitination of histone H2A is a prerequisite for subsequent phosphorylation at 'Ser-11' of histone H3 (H3S10ph), and is required for chromosome segregation when cells enter into mitosis. In resting B- and T-lymphocytes, phosphorylation by AURKB leads to enhance its activity, thereby maintaining transcription in resting lymphocytes. Regulates Hox gene expression via histone H2A deubiquitination. Prefers nucleosomal substrates. Does not deubiquitinate histone H2B. Also deubiquitinates non-histone proteins, such as ribosomal protein RPS27A: deubiquitination of monoubiquitinated RPS27A promotes maturation of the 40S ribosomal subunit. Also mediates deubiquitination of tektin proteins (TEKT1, TEKT2, TEK3, TEKT4 and TEKT5), promoting their stability. The protein is Ubiquitin carboxyl-terminal hydrolase 16 of Homo sapiens (Human).